The primary structure comprises 97 residues: Integration host factor subunit alpha (97 aa).

It belongs to the bacterial histone-like protein family. In terms of assembly, heterodimer of an alpha and a beta chain.

In terms of biological role, this protein is one of the two subunits of integration host factor, a specific DNA-binding protein that functions in genetic recombination as well as in transcriptional and translational control. This Acinetobacter baylyi (strain ATCC 33305 / BD413 / ADP1) protein is Integration host factor subunit alpha.